The primary structure comprises 159 residues: Ribosomal RNA large subunit methyltransferase H (159 aa).

Residues leucine 76, glycine 108, and 127–132 (FSKMTF) each bind S-adenosyl-L-methionine.

This sequence belongs to the RNA methyltransferase RlmH family. As to quaternary structure, homodimer.

The protein localises to the cytoplasm. The catalysed reaction is pseudouridine(1915) in 23S rRNA + S-adenosyl-L-methionine = N(3)-methylpseudouridine(1915) in 23S rRNA + S-adenosyl-L-homocysteine + H(+). In terms of biological role, specifically methylates the pseudouridine at position 1915 (m3Psi1915) in 23S rRNA. The protein is Ribosomal RNA large subunit methyltransferase H of Clostridium kluyveri (strain NBRC 12016).